A 585-amino-acid polypeptide reads, in one-letter code: Dihydroxy-acid dehydratase, mitochondrial (585 aa).

A mitochondrion-targeting transit peptide spans 1–20 (MGLLTKVATSRQFSTTRCVA). C70 lines the [2Fe-2S] cluster pocket. A Mg(2+)-binding site is contributed by D102. Residue C143 coordinates [2Fe-2S] cluster. D144 provides a ligand contact to Mg(2+). A [2Fe-2S] cluster-binding site is contributed by C221. Residue E474 coordinates Mg(2+). Residue S500 is the Proton acceptor of the active site.

This sequence belongs to the IlvD/Edd family. Requires [2Fe-2S] cluster as cofactor. It depends on Mg(2+) as a cofactor.

Its subcellular location is the mitochondrion. It catalyses the reaction (2R)-2,3-dihydroxy-3-methylbutanoate = 3-methyl-2-oxobutanoate + H2O. The catalysed reaction is (2R,3R)-2,3-dihydroxy-3-methylpentanoate = (S)-3-methyl-2-oxopentanoate + H2O. It functions in the pathway amino-acid biosynthesis; L-isoleucine biosynthesis; L-isoleucine from 2-oxobutanoate: step 3/4. It participates in amino-acid biosynthesis; L-valine biosynthesis; L-valine from pyruvate: step 3/4. With respect to regulation, catalytic activity is inactivated under iron-limiting conditions. Dihydroxyacid dehydratase that catalyzes the third step in the common pathway leading to biosynthesis of branched-chain amino acids. Catalyzes the dehydration of (2R,3R)-2,3-dihydroxy-3-methylpentanoate (2,3-dihydroxy-3-methylvalerate) into 2-oxo-3-methylpentanoate (2-oxo-3-methylvalerate) and of (2R)-2,3-dihydroxy-3-methylbutanoate (2,3-dihydroxyisovalerate) into 2-oxo-3-methylbutanoate (2-oxoisovalerate), the penultimate precursor to L-isoleucine and L-valine, respectively. Required for the synthesis of alpha-isopropylmalate which modulates the activity of LEU3 and subsequently regulates the expression of LEU1. The polypeptide is Dihydroxy-acid dehydratase, mitochondrial (Saccharomyces cerevisiae (strain ATCC 204508 / S288c) (Baker's yeast)).